Reading from the N-terminus, the 376-residue chain is Mitogen-activated protein kinase 2 (376 aa).

The 288-residue stretch at 32 to 319 (YVPIKPIGRG…VTEALQHPYM (288 aa)) folds into the Protein kinase domain. Residues 38-46 (IGRGAYGVV) and Lys61 each bind ATP. The Proton acceptor role is filled by Asp158. Thr191 is modified (phosphothreonine). Residues 191 to 193 (TEY) carry the TXY motif. Tyr193 is modified (phosphotyrosine). Thr196 bears the Phosphothreonine mark.

The protein belongs to the protein kinase superfamily. CMGC Ser/Thr protein kinase family. MAP kinase subfamily. Interacts with MKK3. Post-translationally, dually phosphorylated on Thr-191 and Tyr-193, which activates the enzyme. Phosphorylated on Ser residue. As to expression, highest levels in the stem. Present in the leaf, root and flower, but not in seeds.

It carries out the reaction L-seryl-[protein] + ATP = O-phospho-L-seryl-[protein] + ADP + H(+). The enzyme catalyses L-threonyl-[protein] + ATP = O-phospho-L-threonyl-[protein] + ADP + H(+). Its activity is regulated as follows. Activated by threonine and tyrosine phosphorylation. The polypeptide is Mitogen-activated protein kinase 2 (MPK2) (Arabidopsis thaliana (Mouse-ear cress)).